The sequence spans 171 residues: Ribosome maturation factor RimM (171 aa).

The region spanning 97–170 (KLNYFSWDHY…IIYMKLPVGL (74 aa)) is the PRC barrel domain.

Belongs to the RimM family. Binds ribosomal protein uS19.

The protein resides in the cytoplasm. In terms of biological role, an accessory protein needed during the final step in the assembly of 30S ribosomal subunit, possibly for assembly of the head region. Essential for efficient processing of 16S rRNA. May be needed both before and after RbfA during the maturation of 16S rRNA. It has affinity for free ribosomal 30S subunits but not for 70S ribosomes. This chain is Ribosome maturation factor RimM, found in Azobacteroides pseudotrichonymphae genomovar. CFP2.